The sequence spans 325 residues: Probable cell division protein WhiA (325 aa).

Residues serine 273–asparagine 306 constitute a DNA-binding region (H-T-H motif).

The protein belongs to the WhiA family.

Its function is as follows. Involved in cell division and chromosome segregation. This chain is Probable cell division protein WhiA, found in Frankia casuarinae (strain DSM 45818 / CECT 9043 / HFP020203 / CcI3).